The chain runs to 437 residues: Phosphatidylserine decarboxylase proenzyme 1, mitochondrial (437 aa).

The N-terminal 18 residues, 1-18 (MLKFHRNVKPQFGAFARY), are a transit peptide targeting the mitochondrion. Topologically, residues 19-38 (SSLGKHNSRKRVGIIRLAYG) are mitochondrial matrix. The helical transmembrane segment at 39–57 (LTGIGLVGLAGFAWAQDRH) threads the bilayer. The Mitochondrial intermembrane portion of the chain corresponds to 58–437 (EKTYQKKGVQ…PLGRVVPSSH (380 aa)). Catalysis depends on charge relay system; for autoendoproteolytic cleavage activity residues Asp-157, His-287, and Ser-401. The active-site Schiff-base intermediate with substrate; via pyruvic acid; for decarboxylase activity is Ser-401. Pyruvic acid (Ser); by autocatalysis is present on Ser-401.

This sequence belongs to the phosphatidylserine decarboxylase family. PSD-B subfamily. Eukaryotic type I sub-subfamily. Heterodimer of a large membrane-associated beta subunit and a small pyruvoyl-containing alpha subunit. The cofactor is pyruvate. In terms of processing, is synthesized initially as an inactive proenzyme. Formation of the active enzyme involves a self-maturation process in which the active site pyruvoyl group is generated from an internal serine residue via an autocatalytic post-translational modification. Two non-identical subunits are generated from the proenzyme in this reaction, and the pyruvate is formed at the N-terminus of the alpha chain, which is derived from the carboxyl end of the proenzyme. The autoendoproteolytic cleavage occurs by a canonical serine protease mechanism, in which the side chain hydroxyl group of the serine supplies its oxygen atom to form the C-terminus of the beta chain, while the remainder of the serine residue undergoes an oxidative deamination to produce ammonia and the pyruvoyl prosthetic group on the alpha chain. During this reaction, the Ser that is part of the protease active site of the proenzyme becomes the pyruvoyl prosthetic group, which constitutes an essential element of the active site of the mature decarboxylase.

The protein resides in the mitochondrion. It localises to the mitochondrion inner membrane. It carries out the reaction a 1,2-diacyl-sn-glycero-3-phospho-L-serine + H(+) = a 1,2-diacyl-sn-glycero-3-phosphoethanolamine + CO2. The protein operates within phospholipid metabolism; phosphatidylethanolamine biosynthesis; phosphatidylethanolamine from CDP-diacylglycerol: step 2/2. In terms of biological role, catalyzes the formation of phosphatidylethanolamine (PtdEtn) from phosphatidylserine (PtdSer). Plays a central role in phospholipid metabolism and in the interorganelle trafficking of phosphatidylserine. Together with psd2 and psd3, responsible for the majority of phosphatidylethanolamine synthesis. The sequence is that of Phosphatidylserine decarboxylase proenzyme 1, mitochondrial from Schizosaccharomyces pombe (strain 972 / ATCC 24843) (Fission yeast).